We begin with the raw amino-acid sequence, 439 residues long: MVTLTPSSASTPKTSFDFMKNNNSHSSLYVSSSSYLSSKEDALVTTKKLMEPSKTLNMSINPKQEEFGDEKKMVKKAPEDPEIGVFGAEKYFNGDMDSDQGSSVLSLTNPEVERTVVDSKQSAKKSTGTPSVRSESSWNSQSVLLQNKLVNSCNSSFKEKKNSNGQIQKVTNNKKSFLANLGCKCACSDGDSVDVEEKTSVKRSADPNISVITMRSSADMNTELIKIQKQEELSQRKSLEVFGSPVAIEKKSSVVQKKLPLPPWKSRTEEDDTKSEGSDSSSDLFEIEGLTGNPKPFLTRQGSDPASPTCYAPSEVSVEWSIVTASAADFSVMSECATSPVRRNRPTQIPRIPITAKSAPQRRKSSSSSGGNGFLMSCKSHKSVMVSGDLDRRSSMNKTQPSYVPRFPMETTKPKSFETRRRISNSSISHTQSSLLYSQ.

A compositionally biased stretch (polar residues) spans Met1 to Thr14. 3 disordered regions span residues Met1–Asn22, Lys54–Asp80, and Gln100–Asn139. Over residues Lys63–Glu79 the composition is skewed to basic and acidic residues. Composition is skewed to polar residues over residues Gln100 to Asn109 and Asp118 to Asn139. Residues Ser238 and Ser244 each carry the phosphoserine modification. Disordered regions lie at residues Leu259–Tyr311 and Thr355–Gln439. A compositionally biased stretch (basic and acidic residues) spans Thr412–Arg421. Low complexity predominate over residues Ser424 to Gln439.

Belongs to the PKS family. As to quaternary structure, interacts with PKS2, RPT3, PHOT1, PHOT2 and the C-termini of both phytochromes A (phyA) and B (phyB). Binds both spectral forms of phytochrome, Pr and Pfr. Phosphorylated on Ser and to a lower extent on Thr by phytochromes. Phosphorylation is stimulated twofold by red light. As to expression, expressed in young seedlings in both darkness and light. Moderate in leaves and very low in roots and flowers. Expressed in the elongation zone of the root and hypocotyl.

It localises to the cell membrane. In terms of biological role, may be responsible for light-regulated cytoplasmic sequestration of phytochromes or may be a negative regulator of phytochrome B signaling. Component of the network that modulates the very low-fluence response (VLFR) branch of phyA signaling. Acts positively in PHOT1 signaling. Regulates phytochrome-mediated photomorphogenesis and hypocotyl phototropism. Involved in the control of leaf flattening and leaf positioning. Promotes negative root phototropism and negatively regulates root gravitropism. May act by controlling auxin homeostasis. This Arabidopsis thaliana (Mouse-ear cress) protein is Protein PHYTOCHROME KINASE SUBSTRATE 1 (PKS1).